Consider the following 387-residue polypeptide: NADPH-dependent aldehyde reductase YqhD (387 aa).

Gly38, Ser40, Asn68, Gly95, Ser96, Asp99, Thr138, Asn147, Gly149, Lys160, Tyr179, and Thr182 together coordinate NADP(+). Zn(2+) contacts are provided by Asp194, His198, His267, and His281.

The protein belongs to the iron-containing alcohol dehydrogenase family. In terms of assembly, homodimer. The crystals contain two dimers in the asymmetric unit. It depends on Zn(2+) as a cofactor.

It carries out the reaction a primary alcohol + NADP(+) = an aldehyde + NADPH + H(+). The catalysed reaction is butan-1-ol + NADP(+) = butanal + NADPH + H(+). The enzyme catalyses 1-propanol + NADP(+) = propanal + NADPH + H(+). It catalyses the reaction allyl alcohol + NADP(+) = acrolein + NADPH + H(+). In terms of biological role, exhibits NADPH-dependent reductase activity for a broad range of short-chain aldehydes. Shows highest catalytic efficiency toward butanal, propanal and the highly toxic aldehydes acrolein and malondialdehyde (MDA), which are produced mainly during lipid peroxidation. Mediates resistance to reactive oxygen species (ROS) elicitors, such as paraquat and potassium tellurite, probably by protecting the cell against the toxic effects of reactive aldehydes derived from membrane lipid peroxidation. Also acts, with lower efficiency, on acetaldehyde, glyceraldehyde, glycolaldehyde, methylglyoxal, glyoxal and hydroxyacetone. Could be involved in glyoxal metabolism, by catalyzing the reduction of glyoxal to glycolaldehyde, and further to 1,2-ethandiol. Catalyzes the reduction of isobutyraldehyde (2-methylpropanal) to isobutanol, and probably contributes to the production of isobutanol. Can probably catalyze the reduction of glutaraldehyde, a widely used biocide, to 1,5-pentanediol, which is non-toxic. Overexpression of YqhD protects the cells against glutaraldehyde toxicity. Can catalyze in vitro the NADPH-dependent reduction of furfural, a natural product of lignocellulosic decomposition, to the less toxic product, furfuryl alcohol. However, it is unlikely that furfural is a physiological substrate. Its function is as follows. In contrast, Sulzenbacher et al. detected significant activities only in the presence of alcohol and NADP(+). They reported in vitro NADP(+)-dependent alcohol dehydrogenase (ADH) activity towards various alcohols, with a preference for alcohols longer than C(3), but the affinity for the substrates is poor, suggesting that these compounds are not the physiological substrates. Perez et al. did not detect dehydrogenase activity with short and medium chain alcohols such as methanol, ethanol, propanol, butanol or isopropanol. In Escherichia coli (strain K12), this protein is NADPH-dependent aldehyde reductase YqhD (yqhD).